The chain runs to 282 residues: Kanosamine-6-phosphate phosphatase (282 aa).

D25 serves as the catalytic Nucleophile. Residues D25 and D27 each coordinate Mg(2+). Residue K209 coordinates phosphate. Residues D232 and S233 each coordinate Mg(2+). Residue N235 participates in phosphate binding.

It belongs to the HAD-like hydrolase superfamily. Cof family. As to quaternary structure, homotetramer. The cofactor is Mg(2+).

The catalysed reaction is D-kanosamine 6-phosphate + H2O = kanosamine + phosphate. The protein operates within antibiotic biosynthesis; kanosamine biosynthesis. Its function is as follows. Involved in the biosynthesis of kanosamine (3-amino-3-deoxy-D-glucose), which is known to have antibiotic and antifungal properties, and to be a precursor of the antibiotic neotrehalosadiamine (3,3'-diamino-3,3'-dideoxy-alpha,beta-trehalose (NTD)). Catalyzes the dephosphorylation of kanosamine 6-phosphate to yield kanosamine. There is a trace amount of activity using glucosamine-6-phosphate. In Bacillus subtilis (strain 168), this protein is Kanosamine-6-phosphate phosphatase (ntdB).